Here is a 271-residue protein sequence, read N- to C-terminus: Mannosyl-3-phosphoglycerate phosphatase (271 aa).

Asp-13 functions as the Nucleophile in the catalytic mechanism. Residues Asp-13, Asp-15, and Asp-214 each contribute to the Mg(2+) site.

The protein belongs to the HAD-like hydrolase superfamily. MPGP family. Mg(2+) is required as a cofactor.

It localises to the cytoplasm. The catalysed reaction is 2-O-(alpha-D-mannosyl)-3-phosphoglycerate + H2O = (2R)-2-O-(alpha-D-mannosyl)-glycerate + phosphate. This Escherichia coli O6:K15:H31 (strain 536 / UPEC) protein is Mannosyl-3-phosphoglycerate phosphatase (yedP).